The chain runs to 155 residues: Small ribosomal subunit protein uS9 (155 aa).

This sequence belongs to the universal ribosomal protein uS9 family.

The polypeptide is Small ribosomal subunit protein uS9 (Rhizobium leguminosarum bv. trifolii (strain WSM2304)).